Reading from the N-terminus, the 90-residue chain is Gene 56 protein (90 aa).

A Glutaredoxin domain is found at 1–90 (MRTMFTPITI…DYYTASETGL (90 aa)). C16 and C19 are oxidised to a cystine.

This is Gene 56 protein (56) from Mycobacterium phage D29 (Mycobacteriophage D29).